The primary structure comprises 2149 residues: Polyketide synthase 1 (2149 aa).

Residues 19 to 261 (FIFGDQSSCN…TRLAVHAPYH (243 aa)) form an N-terminal acylcarrier protein transacylase domain (SAT) region. Positions 394–829 (ESKIAIIGMS…GGNTALLVED (436 aa)) constitute a Ketosynthase family 3 (KS3) domain. Active-site for beta-ketoacyl synthase activity residues include C566, H701, and H745. The segment at 929–1233 (AFVFSGQGSQ…PSLMRNKDGW (305 aa)) is malonyl-CoA:ACP transacylase (MAT) domain. S1018 (for acyl/malonyl transferase activity) is an active-site residue. A product template (PT) domain region spans residues 1310 to 1624 (TASVHRIVHE…RKVLNTAMPP (315 aa)). The tract at residues 1314–1447 (HRIVHESVDK…SSLHFERPKV (134 aa)) is N-terminal hotdog fold. One can recognise a PKS/mFAS DH domain in the interval 1314–1619 (HRIVHESVDK…FQGIPRKVLN (306 aa)). H1346 acts as the Proton acceptor; for dehydratase activity in catalysis. Residues 1474–1619 (LNSRMSSGVI…FQGIPRKVLN (146 aa)) form a C-terminal hotdog fold region. D1533 acts as the Proton donor; for dehydratase activity in catalysis. Residues 1619–1657 (NTAMPPPKSQNEAPVRSAPAKPAAKPPKSASSEHSGHFA) are disordered. Positions 1635 to 1650 (SAPAKPAAKPPKSASS) are enriched in low complexity. Positions 1678 to 1752 (RNPMLAVFKI…DLATHLGLDT (75 aa)) constitute a Carrier 1 domain. S1712 is modified (O-(pantetheine 4'-phosphoryl)serine). Residues 1755–1790 (SDQSSGQSSSSGGLSPRSDSIGEITSSATTPPSLSP) show a composition bias toward low complexity. The disordered stretch occupies residues 1755-1796 (SDQSSGQSSSSGGLSPRSDSIGEITSSATTPPSLSPRGSVSG). The Carrier 2 domain maps to 1793 to 1870 (SVSGSQCKDV…SFKHMFQQGH (78 aa)). S1830 carries the O-(pantetheine 4'-phosphoryl)serine modification. Residues 1882–2147 (LKQYRATSTL…ERVAAFIRST (266 aa)) are thioesterase (TE) domain. Catalysis depends on S1973, which acts as the For thioesterase activity.

Functionally, polyketide synthase; part of the Pks1 gene cluster that mediates the biosynthesis of an anthraquinone derivative pigment that contributes to conidial pigmentation that provides protection from UV radiation, heat and cold stress. The polyketide synthase Pks1 produces 1-acetyl-2,4,6,8-tetrahydroxy-9,10-anthraquinone though condensation of acetyl-CoA with malonyl-CoA. The dehydratase EthD and the laccase Mlac1 further convert the anthraquinone derivative into the final conidial pigment. The polypeptide is Polyketide synthase 1 (Metarhizium majus (strain ARSEF 297)).